We begin with the raw amino-acid sequence, 407 residues long: Phosphopentomutase (407 aa).

Residues Asp-10, Asp-306, His-311, Asp-347, His-348, and His-359 each coordinate Mn(2+).

Belongs to the phosphopentomutase family. Mn(2+) serves as cofactor.

It is found in the cytoplasm. The catalysed reaction is 2-deoxy-alpha-D-ribose 1-phosphate = 2-deoxy-D-ribose 5-phosphate. It carries out the reaction alpha-D-ribose 1-phosphate = D-ribose 5-phosphate. The protein operates within carbohydrate degradation; 2-deoxy-D-ribose 1-phosphate degradation; D-glyceraldehyde 3-phosphate and acetaldehyde from 2-deoxy-alpha-D-ribose 1-phosphate: step 1/2. In terms of biological role, isomerase that catalyzes the conversion of deoxy-ribose 1-phosphate (dRib-1-P) and ribose 1-phosphate (Rib-1-P) to deoxy-ribose 5-phosphate (dRib-5-P) and ribose 5-phosphate (Rib-5-P), respectively. This is Phosphopentomutase from Shigella dysenteriae serotype 1 (strain Sd197).